A 498-amino-acid polypeptide reads, in one-letter code: TORTIFOLIA1-like protein 5 (498 aa).

HEAT repeat units follow at residues 56–93 (ETFS…SHGD), 97–134 (PHLS…NITG), 136–173 (PFSI…AADE), 177–214 (EQLQ…AVGG), and 219–257 (KAVL…VEEE). The disordered stretch occupies residues 296–423 (EGDSTEVSES…SSSQAKSNAE (128 aa)). The span at 300–322 (TEVSESSSSSKSASSGLSATSGK) shows a compositional bias: low complexity. Positions 343–366 (NDVEPLDRGDTPKDVEQEAVVSKE) are enriched in basic and acidic residues. Polar residues predominate over residues 390 to 400 (NGSNKSQVVQS). Residue Ser-426 is modified to Phosphoserine.

This chain is TORTIFOLIA1-like protein 5, found in Arabidopsis thaliana (Mouse-ear cress).